The chain runs to 593 residues: Cysteine/serine-rich nuclear protein 1 (593 aa).

Disordered regions lie at residues 1–66, 313–392, and 478–497; these read MTGL…RDFC, FREL…GVDD, and REGS…GQSS. Low complexity-rich tracts occupy residues 17–46 and 351–372; these read SSVS…VSRA and SCSS…TSGA.

It belongs to the AXUD1 family.

It is found in the nucleus. Binds to the consensus sequence 5'-AGAGTG-3' and has transcriptional activator activity. May have a tumor-suppressor function. May play a role in apoptosis. The sequence is that of Cysteine/serine-rich nuclear protein 1 (CSRNP1) from Pongo abelii (Sumatran orangutan).